The primary structure comprises 420 residues: Methyltransferase/ribosomally synthesized cyclic peptide gymnopeptides precursor gymMA1 (420 aa).

The methyltransferase domain stretch occupies residues 1–251 (MQSSTQKQAG…GISTFYIPPK (251 aa)). Catalysis depends on residues arginine 72, tyrosine 76, and tyrosine 98. Residues tyrosine 98, histidine 100, valine 103, alanine 130, glutamine 172, alanine 213, serine 244, and threonine 245 each contribute to the S-adenosyl-L-methionine site. Residues 252–378 (ELKDPSMDIM…WALRCAMKKM (127 aa)) form a clasp domain region. Positions 379-392 (PSSFMDEVDANNLP) are precursor leader. N-methylvaline is present on residues valine 394 and valine 396. Position 398 is an N-methylglycine (glycine 398). Position 399 is an N-methylvaline (valine 399). Alanine 400 carries the N-methylalanine modification. The residue at position 402 (glycine 402) is an N-methylglycine. Valine 404, valine 406, valine 408, and valine 410 each carry N-methylvaline.

In the N-terminal section; belongs to the precorrin methyltransferase family. As to quaternary structure, homodimer. GymMA1 automethylates at Val-394, Val-396, Gly-398, Val-399, Ala-400, Gly-402, Val-404, Val-406, Val-408 and Val-410 before being processed by a prolyloligopeptidase which likely forms a peptidyl ester upon removal of the follower propeptide, which then undergoes macrocyclization with the N-terminus of the modified core peptide. Peptide backbone alpha-N-methylations change the physicochemical properties of amide bonds to provide structural constraints and other favorable characteristics including biological membrane permeability to peptides.

It participates in mycotoxin biosynthesis. Functionally, fusion protein of the methyltransferase gymM1 and the gymnopeptides precursor; part of the gene cluster that mediates the biosynthesis of gymnopeptides, highly methylated cyclic octadecapeptides with striking antiproliferative activity on several human cancer cell lines. Gymnopeptides derive from the C-terminus of the gymMA1 protein, and it is the gymMA1 protein that methylates its own C-terminus using S-adenosyl methionine (SAM). The C-terminus is subsequently cleaved off and macrocyclized by a prolyloligopeptidase to give the final product. This chain is Methyltransferase/ribosomally synthesized cyclic peptide gymnopeptides precursor gymMA1, found in Gymnopus fusipes (Spindle toughshank).